Consider the following 151-residue polypeptide: Deazaflavin-dependent nitroreductase (151 aa).

Coenzyme F420-(gamma-Glu)n is bound by residues 54 to 56 (RKT), 60 to 65 (RVNPLY), 76 to 79 (AASK), 87 to 91 (MWYLN), and Tyr-133.

It belongs to the F420H(2)-dependent quinone reductase family.

The protein localises to the cell membrane. The enzyme catalyses oxidized coenzyme F420-(gamma-L-Glu)(n) + a quinol + H(+) = reduced coenzyme F420-(gamma-L-Glu)(n) + a quinone. Its function is as follows. Involved in a F420-dependent anti-oxidant mechanism that protects M.tuberculosis against oxidative stress and bactericidal agents. Catalyzes the F420H(2)-dependent two-electron reduction of quinones to dihydroquinones, thereby preventing the formation of cytotoxic semiquinones obtained by the one-electron reduction pathway. In vitro, catalyzes the reduction of both benzoquinone and naphthoquinone analogs; since menaquinone is the sole quinone electron carrier in the respiratory chain in M.tuberculosis, the physiological electron acceptor for Fqr-mediated F420H(2) oxidation is therefore likely to be the endogenous menaquinone found in the membrane fraction of M.tuberculosis. Is able to use F420 species with two and five glutamate residues in its polyglutamate tail. Cannot use NADH or NADPH instead of F420H(2) as the electron donor. In terms of biological role, is involved in the bioreductive activation of bicyclic 4-nitroimidazole prodrugs such as PA-824 and delamanid developed for anti-tuberculosis therapy against both replicating and persistent bacteria. It converts PA-824 into three primary metabolites resulting from reduction of the imidazole ring at C-3; the major one is the corresponding des-nitroimidazole that generates lethal reactive nitrogen species, including nitric oxide (NO), which appears to be responsible for the anaerobic killing activity. Ddn uses the reduced F420 produced by FGD1 to activate PA-824. Delamanid (OPC-67683) is also reduced by Ddn to its des-nitro form. The sequence is that of Deazaflavin-dependent nitroreductase (ddn) from Mycobacterium tuberculosis (strain CDC 1551 / Oshkosh).